A 474-amino-acid chain; its full sequence is Cysteine--tRNA ligase (474 aa).

Cysteine 30 contacts Zn(2+). A 'HIGH' region motif is present at residues 32–42 (PTVYNYAHIGN). Residues cysteine 215, histidine 240, and glutamate 244 each contribute to the Zn(2+) site. Residues 272–276 (KMSKS) carry the 'KMSKS' region motif. Lysine 275 contacts ATP.

This sequence belongs to the class-I aminoacyl-tRNA synthetase family. Monomer. It depends on Zn(2+) as a cofactor.

The protein localises to the cytoplasm. It carries out the reaction tRNA(Cys) + L-cysteine + ATP = L-cysteinyl-tRNA(Cys) + AMP + diphosphate. This chain is Cysteine--tRNA ligase, found in Brachyspira hyodysenteriae (strain ATCC 49526 / WA1).